We begin with the raw amino-acid sequence, 137 residues long: Large ribosomal subunit protein uL16 (137 aa).

Belongs to the universal ribosomal protein uL16 family. Part of the 50S ribosomal subunit.

Its function is as follows. Binds 23S rRNA and is also seen to make contacts with the A and possibly P site tRNAs. This Mycoplasma mycoides subsp. mycoides SC (strain CCUG 32753 / NCTC 10114 / PG1) protein is Large ribosomal subunit protein uL16.